The following is a 108-amino-acid chain: uncharacterized protein (108 aa).

Positions 81–108 are disordered; that stretch reads TNHHQQQQNHQNQQQQQQQPNGIFENNI. A compositionally biased stretch (low complexity) spans 83 to 99; sequence HHQQQQNHQNQQQQQQQ.

This is an uncharacterized protein from Dictyostelium discoideum (Social amoeba).